An 814-amino-acid chain; its full sequence is Valine--tRNA ligase (814 aa).

A 'HIGH' region motif is present at residues 46-56 (PTVSGQLHIGH). A 'KMSKS' region motif is present at residues 536–540 (KMSKS). Lys539 contributes to the ATP binding site.

It belongs to the class-I aminoacyl-tRNA synthetase family. ValS type 2 subfamily. In terms of assembly, monomer.

It is found in the cytoplasm. It catalyses the reaction tRNA(Val) + L-valine + ATP = L-valyl-tRNA(Val) + AMP + diphosphate. Its function is as follows. Catalyzes the attachment of valine to tRNA(Val). As ValRS can inadvertently accommodate and process structurally similar amino acids such as threonine, to avoid such errors, it has a 'posttransfer' editing activity that hydrolyzes mischarged Thr-tRNA(Val) in a tRNA-dependent manner. The protein is Valine--tRNA ligase of Rickettsia typhi (strain ATCC VR-144 / Wilmington).